The sequence spans 126 residues: MAILGMGTDIVEIARVQAIIARSGDKLAHRILTPLELSEYQQHQQPVRFIAKRFAAKEAAAKALGTGFRNGLELRHFQVIHDELGKPHLLVSDKANEMAVRLSVKSWHLSISDERHYAIALVIVEG.

Residues Asp-9 and Glu-58 each coordinate Mg(2+).

Belongs to the P-Pant transferase superfamily. AcpS family. Mg(2+) serves as cofactor.

The protein resides in the cytoplasm. It catalyses the reaction apo-[ACP] + CoA = holo-[ACP] + adenosine 3',5'-bisphosphate + H(+). Functionally, transfers the 4'-phosphopantetheine moiety from coenzyme A to a Ser of acyl-carrier-protein. This Hamiltonella defensa subsp. Acyrthosiphon pisum (strain 5AT) protein is Holo-[acyl-carrier-protein] synthase.